The chain runs to 125 residues: Small ribosomal subunit protein uS12 (125 aa).

The segment at 1 to 28 (MPTISQLIGSERKRLTRKTKSPALKSCP) is disordered. A 3-methylthioaspartic acid modification is found at aspartate 89. Positions 104 to 125 (TAGVKDRRQSRSKYGAKAPKND) are disordered.

This sequence belongs to the universal ribosomal protein uS12 family. As to quaternary structure, part of the 30S ribosomal subunit. Contacts proteins S8 and S17. May interact with IF1 in the 30S initiation complex.

In terms of biological role, with S4 and S5 plays an important role in translational accuracy. Functionally, interacts with and stabilizes bases of the 16S rRNA that are involved in tRNA selection in the A site and with the mRNA backbone. Located at the interface of the 30S and 50S subunits, it traverses the body of the 30S subunit contacting proteins on the other side and probably holding the rRNA structure together. The combined cluster of proteins S8, S12 and S17 appears to hold together the shoulder and platform of the 30S subunit. The protein is Small ribosomal subunit protein uS12 of Prochlorococcus marinus subsp. pastoris (strain CCMP1986 / NIES-2087 / MED4).